We begin with the raw amino-acid sequence, 76 residues long: Short coiled-coil protein B (76 aa).

The stretch at 6–52 (ENQVELEEKTRLINQVLELQNTLEDLSARVDAVKEENLKLKSENQVL) forms a coiled coil.

Belongs to the SCOC family.

The protein resides in the golgi apparatus membrane. Its subcellular location is the golgi apparatus. It localises to the trans-Golgi network. The protein localises to the cytoplasm. It is found in the cytosol. Functionally, positive regulator of amino acid starvation-induced autophagy. This Danio rerio (Zebrafish) protein is Short coiled-coil protein B (scocb).